A 423-amino-acid polypeptide reads, in one-letter code: Glucose-1-phosphate adenylyltransferase (423 aa).

Alpha-D-glucose 1-phosphate contacts are provided by residues Tyr-100, Gly-165, Glu-180 to Lys-181, and Ser-191.

Belongs to the bacterial/plant glucose-1-phosphate adenylyltransferase family. As to quaternary structure, homotetramer.

The enzyme catalyses alpha-D-glucose 1-phosphate + ATP + H(+) = ADP-alpha-D-glucose + diphosphate. It participates in glycan biosynthesis; glycogen biosynthesis. Functionally, involved in the biosynthesis of ADP-glucose, a building block required for the elongation reactions to produce glycogen. Catalyzes the reaction between ATP and alpha-D-glucose 1-phosphate (G1P) to produce pyrophosphate and ADP-Glc. This chain is Glucose-1-phosphate adenylyltransferase, found in Lachnospira eligens (strain ATCC 27750 / DSM 3376 / VPI C15-48 / C15-B4) (Eubacterium eligens).